A 261-amino-acid chain; its full sequence is Pyrroline-5-carboxylate reductase (261 aa).

Belongs to the pyrroline-5-carboxylate reductase family.

It localises to the cytoplasm. It catalyses the reaction L-proline + NADP(+) = (S)-1-pyrroline-5-carboxylate + NADPH + 2 H(+). The catalysed reaction is L-proline + NAD(+) = (S)-1-pyrroline-5-carboxylate + NADH + 2 H(+). It participates in amino-acid biosynthesis; L-proline biosynthesis; L-proline from L-glutamate 5-semialdehyde: step 1/1. Its function is as follows. Catalyzes the reduction of 1-pyrroline-5-carboxylate (PCA) to L-proline. The sequence is that of Pyrroline-5-carboxylate reductase from Thermus thermophilus (strain ATCC BAA-163 / DSM 7039 / HB27).